A 227-amino-acid chain; its full sequence is Small heat shock protein hspG3 (227 aa).

One can recognise a sHSP domain in the interval 31 to 227 (NKRVDIIPSM…SSNTIKININ (197 aa)). A disordered region spans residues 119 to 164 (QQQQLENSNKENDEPSIEEFEEDVKSKSELNKTTLNTTENKDEDKT).

The protein belongs to the small heat shock protein (HSP20) family.

The chain is Small heat shock protein hspG3 (hspG3) from Dictyostelium discoideum (Social amoeba).